Here is a 120-residue protein sequence, read N- to C-terminus: Large ribosomal subunit protein uL18 (120 aa).

The tract at residues 1–22 (MITKTSKNAARQKRHARVRAKL) is disordered. Over residues 10–20 (ARQKRHARVRA) the composition is skewed to basic residues.

This sequence belongs to the universal ribosomal protein uL18 family. As to quaternary structure, part of the 50S ribosomal subunit; part of the 5S rRNA/L5/L18/L25 subcomplex. Contacts the 5S and 23S rRNAs.

This is one of the proteins that bind and probably mediate the attachment of the 5S RNA into the large ribosomal subunit, where it forms part of the central protuberance. The chain is Large ribosomal subunit protein uL18 from Bacillus velezensis (strain DSM 23117 / BGSC 10A6 / LMG 26770 / FZB42) (Bacillus amyloliquefaciens subsp. plantarum).